Here is a 1333-residue protein sequence, read N- to C-terminus: Aldehyde oxidase 1 (1333 aa).

The 2Fe-2S ferredoxin-type domain occupies 4–91; it reads PQLLFYVNGQ…GTAVTTVEGI (88 aa). [2Fe-2S] cluster-binding residues include cysteine 43, cysteine 48, cysteine 51, and cysteine 73. Mo-molybdopterin is bound at residue glutamine 112. Positions 113, 116, 148, and 150 each coordinate [2Fe-2S] cluster. A Mo-molybdopterin-binding site is contributed by cysteine 150. The region spanning 235-420 is the FAD-binding PCMH-type domain; it reads FYSNRMTWIS…VSVNIPCSRK (186 aa). Residues 263–270, alanine 344, serine 353, histidine 357, aspartate 366, and leucine 410 each bind FAD; that span reads IVMGYTSV. Residues 801-802 and methionine 1042 contribute to the Mo-molybdopterin site; that span reads AF. Serine 1063 is modified (phosphoserine). Mo-molybdopterin contacts are provided by residues 1083 to 1086, glutamine 1198, and leucine 1263; that span reads GSVV. Glutamate 1265 acts as the Proton acceptor; for azaheterocycle hydroxylase activity in catalysis.

Belongs to the xanthine dehydrogenase family. As to quaternary structure, homodimer. The cofactor is [2Fe-2S] cluster. FAD is required as a cofactor. Requires Mo-molybdopterin as cofactor. Post-translationally, the N-terminus is blocked. Expression in liver (at protein level). Also detected in heart, lung, spleen and kidney.

It localises to the cytoplasm. It carries out the reaction an aldehyde + O2 + H2O = a carboxylate + H2O2 + H(+). It catalyses the reaction retinal + O2 + H2O = retinoate + H2O2 + H(+). Its activity is regulated as follows. Inhibited by menadione and isovanillin. Not inhibited by allopurinol, a xanthine dehydrogenase potent inhibitor. Inhibited by the flavonoids quercetin, myricetin and genistein. Nitric oxide generation is inhibited by raloxifene and competitively inhibited by an increase in oxygen levels. Its function is as follows. Oxidase with broad substrate specificity, oxidizing aromatic azaheterocycles, such as N1-methylnicotinamide, N-methylphthalazinium and phthalazine, as well as aldehydes, such as benzaldehyde, retinal, pyridoxal, and vanillin. Plays a role in the metabolism of xenobiotics and drugs containing aromatic azaheterocyclic substituents. Participates in the bioactivation of prodrugs such as famciclovir, catalyzing the oxidation step from 6-deoxypenciclovir to penciclovir, which is a potent antiviral agent. Is probably involved in the regulation of reactive oxygen species homeostasis. Is a prominent source of superoxide generation via the one-electron reduction of molecular oxygen. Also catalyzes nitric oxide (NO) production; under anaerobic conditions, reduces nitrite to NO with NADH or aldehyde as electron donor, but under aerobic conditions, NADH is the preferred substrate. These reactions may be catalyzed by several isozymes. May play a role in adipogenesis. This is Aldehyde oxidase 1 from Rattus norvegicus (Rat).